Reading from the N-terminus, the 238-residue chain is uncharacterized protein (238 aa).

The next 7 helical transmembrane spans lie at Phe-15 to Pro-37, Ala-50 to Leu-69, Leu-79 to Ile-96, Ile-101 to Leu-118, Ile-128 to Leu-150, Cys-163 to Gly-183, and Phe-203 to Phe-225.

Its subcellular location is the cell membrane. This is an uncharacterized protein from Treponema pallidum (strain Nichols).